Reading from the N-terminus, the 1479-residue chain is Chromosome partition protein MukB (1479 aa).

34 to 41 (GGNGAGKS) contacts ATP. Coiled coils occupy residues 337–418 (LNLV…QYQQ), 511–604 (QAER…APVW), 780–810 (RAAR…DVQK), 847–1116 (ELDR…AKAG), and 1206–1265 (DDPV…LQAV). Residues 666-783 (PGGSEDPRLN…EVPLFGRAAR (118 aa)) form a flexible hinge region.

Belongs to the SMC family. MukB subfamily. In terms of assembly, homodimerization via its hinge domain. Binds to DNA via its C-terminal region. Interacts, and probably forms a ternary complex, with MukE and MukF via its C-terminal region. The complex formation is stimulated by calcium or magnesium. Interacts with tubulin-related protein FtsZ.

It is found in the cytoplasm. The protein resides in the nucleoid. Its function is as follows. Plays a central role in chromosome condensation, segregation and cell cycle progression. Functions as a homodimer, which is essential for chromosome partition. Involved in negative DNA supercoiling in vivo, and by this means organize and compact chromosomes. May achieve or facilitate chromosome segregation by condensation DNA from both sides of a centrally located replisome during cell division. This is Chromosome partition protein MukB from Pectobacterium atrosepticum (strain SCRI 1043 / ATCC BAA-672) (Erwinia carotovora subsp. atroseptica).